The sequence spans 143 residues: Transcriptional regulator MraZ (143 aa).

2 SpoVT-AbrB domains span residues 5-47 and 76-119; these read QYEH…SLDE and AVEC…SKEV.

Belongs to the MraZ family. In terms of assembly, forms oligomers.

Its subcellular location is the cytoplasm. The protein localises to the nucleoid. This Caldanaerobacter subterraneus subsp. tengcongensis (strain DSM 15242 / JCM 11007 / NBRC 100824 / MB4) (Thermoanaerobacter tengcongensis) protein is Transcriptional regulator MraZ.